A 263-amino-acid chain; its full sequence is Lens fiber major intrinsic protein (263 aa).

Residues 1–9 are Cytoplasmic-facing; the sequence is MWELRSASF. Residues 10-29 form a helical membrane-spanning segment; the sequence is WRAIFAEFFATLFYVFFGLG. The Extracellular segment spans residues 30 to 41; it reads SSLRWAPGPLHV. A helical transmembrane segment spans residues 42 to 59; that stretch reads LQVAMAFGLALATLVQSV. The Cytoplasmic portion of the chain corresponds to 60 to 61; it reads GH. Positions 62-77 form an intramembrane region, discontinuously helical; it reads ISGAHVNPAVTFAFLV. The NPA 1 signature appears at 68–70; that stretch reads NPA. Residues 78 to 82 lie on the Cytoplasmic side of the membrane; sequence GSQMS. The helical transmembrane segment at 83 to 106 threads the bilayer; sequence LLRAFCYMAAQLLGAVAGAAVLYS. At 107 to 127 the chain is on the extracellular side; that stretch reads VTPPAVRGNLALNTLHPAVSV. Residues 128-148 traverse the membrane as a helical segment; sequence GQATTVEIFLTLQFVLCIFAT. Topologically, residues 149–156 are cytoplasmic; that stretch reads YDERRNGQ. The chain crosses the membrane as a helical span at residues 157–175; that stretch reads LGSVALAVGFSLALGHLFG. The Extracellular portion of the chain corresponds to 176 to 178; it reads MYY. An intramembrane region (discontinuously helical) is located at residues 179 to 193; sequence TGAGMNPARSFAPAI. The NPA 2 signature appears at 184 to 186; that stretch reads NPA. Topologically, residues 194–200 are extracellular; that stretch reads LTGNFTN. Residues 201 to 222 traverse the membrane as a helical segment; it reads HWVYWVGPIIGGGLGSLLYDFL. Topologically, residues 223–263 are cytoplasmic; it reads LFPRLKSISERLSVLKGAKPDVSNGQPEVTGEPVELNTQAL. The interaction with CALM stretch occupies residues 227–237; sequence LKSISERLSVL. Phosphoserine is present on residues Ser235 and Ser245. Asn246 and Asn259 each carry deamidated asparagine; by deterioration.

This sequence belongs to the MIP/aquaporin (TC 1.A.8) family. As to quaternary structure, homotetramer; each monomer provides an independent water pore. Two homotetramers on opposing membranes can dimerize, forming a cell-cell junction. Interacts with CALM; the calcium-calmodulin/CALM complex interacts with the cytoplasmic domains of two aquaporins, leading to channel closure. Interacts with BFSP1 (via C-terminus); prevents calcium-dependent inhibition of the water channel activity. Post-translationally, subject to partial proteolytic cleavage in the eye lens core. Partial proteolysis promotes interactions between tetramers from adjoining membranes. Fatty acylated at Met-1 and Lys-238. The acyl modifications, in decreasing order of ion abundance, are: oleoyl (C18:1) &gt; palmitoyl (C16:0) &gt; stearoyl (C18:0) &gt; eicosenoyl (C20:1) &gt; dihomo-gamma-linolenoyl (C20:3) &gt; palmitoleoyl (C16:1) &gt; eicosadienoyl (C20:2). As to expression, expressed in the cortex and nucleus of the retina lens (at protein level). Major component of lens fiber gap junctions.

The protein resides in the cell membrane. The protein localises to the cell junction. It carries out the reaction H2O(in) = H2O(out). With respect to regulation, the water channel activity is inhibited by calcium through calmodulin/CALM. In terms of biological role, aquaporins form homotetrameric transmembrane channels, with each monomer independently mediating water transport across the plasma membrane along its osmotic gradient. Specifically expressed in lens fiber cells, this aquaporin is crucial for maintaining lens water homeostasis and transparency. Beyond water permeability, it also acts as a cell-to-cell adhesion molecule, forming thin junctions between lens fiber cells that are essential for maintaining the ordered structure and transparency of the lens. This is Lens fiber major intrinsic protein from Homo sapiens (Human).